The primary structure comprises 198 residues: Glycerol-3-phosphate acyltransferase (198 aa).

A run of 5 helical transmembrane segments spans residues 5 to 25 (LILL…LWIG), 56 to 76 (SIVT…PFFF), 84 to 104 (FWLL…FAGF), 114 to 134 (AGVI…IFLL), and 158 to 178 (LFMG…FVVW).

This sequence belongs to the PlsY family. Probably interacts with PlsX.

Its subcellular location is the cell membrane. It catalyses the reaction an acyl phosphate + sn-glycerol 3-phosphate = a 1-acyl-sn-glycero-3-phosphate + phosphate. The protein operates within lipid metabolism; phospholipid metabolism. Functionally, catalyzes the transfer of an acyl group from acyl-phosphate (acyl-PO(4)) to glycerol-3-phosphate (G3P) to form lysophosphatidic acid (LPA). This enzyme utilizes acyl-phosphate as fatty acyl donor, but not acyl-CoA or acyl-ACP. This is Glycerol-3-phosphate acyltransferase from Listeria welshimeri serovar 6b (strain ATCC 35897 / DSM 20650 / CCUG 15529 / CIP 8149 / NCTC 11857 / SLCC 5334 / V8).